The following is a 227-amino-acid chain: Apoptosis regulator OPG045 (227 aa).

This sequence belongs to the orthopoxvirus OPG045 family. In terms of assembly, homodimer. Interacts with host pro-apoptotic protein BCL2L11 (via BH3 domain). Interacts with host NLRP1. Interacts with host BAK.

It localises to the host mitochondrion outer membrane. The protein localises to the host cytoplasm. Its function is as follows. Plays a role in evading host innate immune response by inhibiting host inflammasome activation. Interacts with and inhibits NLR-mediated interleukin-1 beta/IL1B production in infected cells. At the host mitochondria outer membrane, interacts with the BH3 domain of host BAK and prevents BAK from binding active BAX. In turn, host apoptosis is inhibited. The polypeptide is Apoptosis regulator OPG045 (OPG045) (Oryctolagus cuniculus (Rabbit)).